Here is a 553-residue protein sequence, read N- to C-terminus: CTP synthase (553 aa).

Residues 1 to 277 are amidoligase domain; sequence MPTEPETDYD…DQYVMEELDI (277 aa). Residue S26 participates in CTP binding. S26 contacts UTP. ATP contacts are provided by residues 27-32 and D84; that span reads GLGKGI. Mg(2+) is bound by residues D84 and E152. Residues 159–161, 198–203, and K234 contribute to the CTP site; these read DIE and KTKPTQ. Residues 198–203 and K234 contribute to the UTP site; that span reads KTKPTQ. V252 provides a ligand contact to ATP. A Glutamine amidotransferase type-1 domain is found at 307–544; it reads LVGKYDLEDA…LEAVLGDDPH (238 aa). G364 provides a ligand contact to L-glutamine. Catalysis depends on C391, which acts as the Nucleophile; for glutamine hydrolysis. Residues 392-395, E415, and R472 contribute to the L-glutamine site; that span reads LGFQ. Residues H517 and E519 contribute to the active site.

It belongs to the CTP synthase family. In terms of assembly, homotetramer.

The protein localises to the cytoplasm. It carries out the reaction UTP + L-glutamine + ATP + H2O = CTP + L-glutamate + ADP + phosphate + 2 H(+). It catalyses the reaction L-glutamine + H2O = L-glutamate + NH4(+). The enzyme catalyses UTP + NH4(+) + ATP = CTP + ADP + phosphate + 2 H(+). It functions in the pathway pyrimidine metabolism; CTP biosynthesis via de novo pathway; CTP from UDP: step 2/2. Allosterically activated by GTP, when glutamine is the substrate; GTP has no effect on the reaction when ammonia is the substrate. The allosteric effector GTP functions by stabilizing the protein conformation that binds the tetrahedral intermediate(s) formed during glutamine hydrolysis. Inhibited by the product CTP, via allosteric rather than competitive inhibition. Inhibited by 6-diazo-5-oxo-l-norleucine (DON). Catalyzes the ATP-dependent amination of UTP to CTP with either L-glutamine or ammonia as the source of nitrogen. Regulates intracellular CTP levels through interactions with the four ribonucleotide triphosphates. In Haloarcula hispanica (strain ATCC 33960 / DSM 4426 / JCM 8911 / NBRC 102182 / NCIMB 2187 / VKM B-1755), this protein is CTP synthase.